Here is a 338-residue protein sequence, read N- to C-terminus: 4-hydroxythreonine-4-phosphate dehydrogenase (338 aa).

Positions 140 and 141 each coordinate substrate. Histidine 172, histidine 217, and histidine 271 together coordinate a divalent metal cation. Substrate contacts are provided by lysine 279, asparagine 288, and arginine 297.

It belongs to the PdxA family. Homodimer. Requires a divalent metal cation as cofactor.

The protein resides in the cytoplasm. The enzyme catalyses 4-(phosphooxy)-L-threonine + NAD(+) = 3-amino-2-oxopropyl phosphate + CO2 + NADH. The protein operates within cofactor biosynthesis; pyridoxine 5'-phosphate biosynthesis; pyridoxine 5'-phosphate from D-erythrose 4-phosphate: step 4/5. In terms of biological role, catalyzes the NAD(P)-dependent oxidation of 4-(phosphooxy)-L-threonine (HTP) into 2-amino-3-oxo-4-(phosphooxy)butyric acid which spontaneously decarboxylates to form 3-amino-2-oxopropyl phosphate (AHAP). This is 4-hydroxythreonine-4-phosphate dehydrogenase from Prosthecochloris aestuarii (strain DSM 271 / SK 413).